The chain runs to 345 residues: MAEFFDTPGGIALIILAQVLAVVAFVMISLLFLVYGDRKIWAAVQMRRGPNVVGVYGLLQSVADALKYVVKEVVIPAGADRTVFILAPMTSFVLAMIAWAVIPFNDGWVLSDINVAILYVFAVSSLEVYGVIMGGWASNSKYPFLGSLRSAAQMISYEVSIGLIIIGVILSTGSMNFGDIVRAQDTGWGFFGWYWLPHFPMVFLFFISALAETNRPPFDLPEAESELVAGYQVEYSATPFLLFMAGEYIAIFLMCALTSLLFFGGWLSPIPGLPDGVLWMVAKMAFFFFIFAMVKAITPRYRYDQLMRLGWKVFLPFSLVWVVFVAFAAKFDWFWGAFARWSVGG.

A run of 8 helical transmembrane segments spans residues 14–34 (IILA…LFLV), 84–104 (FILA…VIPF), 115–135 (VAIL…IMGG), 161–181 (IGLI…GDIV), 187–207 (GWGF…LFFI), 248–268 (YIAI…GWLS), 277–297 (VLWM…VKAI), and 309–329 (LGWK…AFAA).

Belongs to the complex I subunit 1 family. In terms of assembly, NDH-1 is composed of 14 different subunits. Subunits NuoA, H, J, K, L, M, N constitute the membrane sector of the complex.

Its subcellular location is the cell inner membrane. It catalyses the reaction a quinone + NADH + 5 H(+)(in) = a quinol + NAD(+) + 4 H(+)(out). In terms of biological role, NDH-1 shuttles electrons from NADH, via FMN and iron-sulfur (Fe-S) centers, to quinones in the respiratory chain. The immediate electron acceptor for the enzyme in this species is believed to be ubiquinone. Couples the redox reaction to proton translocation (for every two electrons transferred, four hydrogen ions are translocated across the cytoplasmic membrane), and thus conserves the redox energy in a proton gradient. This subunit may bind ubiquinone. This is NADH-quinone oxidoreductase subunit H from Ruegeria pomeroyi (strain ATCC 700808 / DSM 15171 / DSS-3) (Silicibacter pomeroyi).